A 443-amino-acid polypeptide reads, in one-letter code: KH domain-containing, RNA-binding, signal transduction-associated protein 1 (443 aa).

A disordered region spans residues 1-96 (MQRRDDPAAR…LPPSATASVK (96 aa)). Over residues 10-21 (RMSRSSGRSGSM) the composition is skewed to low complexity. Residues serine 18, serine 20, and serine 29 each carry the phosphoserine modification. A Phosphothreonine modification is found at threonine 33. At arginine 45 the chain carries Asymmetric dimethylarginine; by PRMT1. Position 52 is an asymmetric dimethylarginine; partial; by PRMT1 (arginine 52). Position 58 is a phosphoserine (serine 58). Threonine 84 is subject to Phosphothreonine; by MAPK1. Residues lysine 96 and lysine 102 each participate in a glycyl lysine isopeptide (Lys-Gly) (interchain with G-Cter in SUMO2) cross-link. An involved in homodimerization region spans residues 100–260 (ENKYLPELMA…VKKFLVPDMM (161 aa)). Serine 113 carries the phosphoserine modification. Residue lysine 139 forms a Glycyl lysine isopeptide (Lys-Gly) (interchain with G-Cter in SUMO2) linkage. Residue serine 150 is modified to Phosphoserine. The 27-residue stretch at 171-197 (NFVGKILGPQGNTIKRLQEETGAKISV) folds into the KH domain. N6-acetyllysine; alternate is present on lysine 175. Lysine 175 is covalently cross-linked (Glycyl lysine isopeptide (Lys-Gly) (interchain with G-Cter in SUMO2); alternate). Threonine 183 carries the phosphothreonine modification. Low complexity predominate over residues 280–293 (PSRGRGVPVRGRGA). Residues 280–316 (PSRGRGVPVRGRGAAPPPPPVPRGRGVGPPRGALVRG) form a disordered region. Omega-N-methylarginine occurs at positions 282, 284, and 291. Residue arginine 304 is modified to Asymmetric dimethylarginine; by PRMT1. Residues 307–316 (GPPRGALVRG) show a composition bias toward low complexity. An omega-N-methylarginine; by PRMT1 mark is found at arginine 310, arginine 315, arginine 320, and arginine 325. Arginine 320 carries the dimethylated arginine; in A2780 ovarian carcinoma cell line modification. Positions 327–346 (ATVTRGVPPPPTVRGAPAPR) are disordered. Arginine 331 and arginine 340 each carry dimethylated arginine; in A2780 ovarian carcinoma cell line. The residue at position 331 (arginine 331) is an Asymmetric dimethylarginine; alternate. Arginine 331 is modified (omega-N-methylarginine; by PRMT1; alternate). Omega-N-methylarginine; by PRMT1 is present on arginine 340. The interaction with HNRNPA1 stretch occupies residues 351 to 443 (GIQRIPLPPP…AYREHPYGRY (93 aa)). Tyrosine 387 is subject to Phosphotyrosine. Serine 390 carries the post-translational modification Phosphoserine. Residues 400–420 (GHGEVQDSYEAYGQDDWNGTR) are interaction with ZBTB7A. The segment at 411–443 (YGQDDWNGTRPSLKAPPARPVKGAYREHPYGRY) is disordered. Lysine 432 participates in a covalent cross-link: Glycyl lysine isopeptide (Lys-Gly) (interchain with G-Cter in SUMO2). Residues 434 to 443 (AYREHPYGRY) show a composition bias toward basic and acidic residues. Phosphotyrosine; by PTK6 is present on residues tyrosine 435, tyrosine 440, and tyrosine 443.

The protein belongs to the KHDRBS family. Self-associates to form homooligomers when bound to RNA, oligomerization appears to be limited when binding to proteins; dimerization increases RNA affinity. Forms a trimeric complex in the nucleus consisting of BANP, HDAC6 and KHDRBS1/SAM68; HDAC6 keeps KHDRBS1 in a deacetylated state which inhibits the inclusion of CD44 alternate exons. The complex is disrupted by MAPK1/MAPK3-mediated phosphorylation of BANP which results in BANP export to the cytoplasm. This facilitates acetylation of KHDRBS1 and CD44 variant exon inclusion. Interacts with KHDRBS3/SLIM-2. Interacts with KHDRBS2/SLIM-1; heterooligomer formation of KHDRBS family proteins may modulate RNA substrate specificity. Interacts with RASA1, LCK, FYN, PTPN6, PLCG1, GRB2, CBL, JAK3, PIK3R, STAT3, APC, HNRNPA1. Interacts with PTK6 (via SH3 and SH2 domains). Forms a complex with ILF2, ILF3, YLPM1, RBMX, NCOA5 and PPP1CA. Does not interact with TPR. Interacts with PRMT1. Binds WBP4/FBP21 (via WW domains), FNBP4/FBP30 (via WW domains). Interacts (via Arg/Gly-rich-flanked Pro-rich regions) with FYN (via the SH3 domain). Interacts with the non-receptor tyrosine kinase SRMS; the interaction leads to phosphorylation of KHDRBS1. Interacts with ZBTB7A; negatively regulates KHDRBS1 splicing activity toward BCL2L1. Tyrosine phosphorylated by several non-receptor tyrosine kinases including LCK, FYN and JAK3. Also tyrosine phosphorylated by the non-receptor tyrosine kinase SRMS in an EGF-dependent manner. Negatively correlates with ability to bind RNA but required for many interactions with proteins. Phosphorylation by PTK6 negatively regulates its RNA binding ability. Phosphorylation by PTK6 at Tyr-440 dictates the nuclear localization of KHDRBS1. Phosphorylation at Tyr-387 disrupts interaction with APC. Phosphorylation at tyrosine residues by FYN inverts activity on modulation of BCL2L1 alternative splicing. Post-translationally, acetylated. Positively correlates with ability to bind RNA. Deacetylated by HDAC6; this regulates alternative splicing by inhibiting the inclusion of CD44 alternate exons. In terms of processing, arginine methylation is required for nuclear localization. Also can affect interaction with other proteins. Inhibits interaction with Src-like SH3 domains, but not interaction with WW domains of WBP4/FBP21 and FNBP4/FBP30. Ubiquitously expressed in all tissue examined. Isoform 1 is expressed at lower levels in brain, skeletal muscle, and liver whereas isoform 3 is intensified in skeletal muscle and in liver.

The protein resides in the nucleus. It localises to the cytoplasm. Its subcellular location is the membrane. Recruited and tyrosine phosphorylated by several receptor systems, for example the T-cell, leptin and insulin receptors. Once phosphorylated, functions as an adapter protein in signal transduction cascades by binding to SH2 and SH3 domain-containing proteins. Role in G2-M progression in the cell cycle. Represses CBP-dependent transcriptional activation apparently by competing with other nuclear factors for binding to CBP. Also acts as a putative regulator of mRNA stability and/or translation rates and mediates mRNA nuclear export. Positively regulates the association of constitutive transport element (CTE)-containing mRNA with large polyribosomes and translation initiation. According to some authors, is not involved in the nucleocytoplasmic export of unspliced (CTE)-containing RNA species according to. RNA-binding protein that plays a role in the regulation of alternative splicing and influences mRNA splice site selection and exon inclusion. Binds to RNA containing 5'-[AU]UAA-3' as a bipartite motif spaced by more than 15 nucleotides. Binds poly(A). Can regulate CD44 alternative splicing in a Ras pathway-dependent manner. In cooperation with HNRNPA1 modulates alternative splicing of BCL2L1 by promoting splicing toward isoform Bcl-X(S), and of SMN1. Can regulate alternative splicing of NRXN1 and NRXN3 in the laminin G-like domain 6 containing the evolutionary conserved neurexin alternative spliced segment 4 (AS4) involved in neurexin selective targeting to postsynaptic partners. In a neuronal activity-dependent manner cooperates synergistically with KHDRBS2/SLIM-1 in regulation of NRXN1 exon skipping at AS4. The cooperation with KHDRBS2/SLIM-1 is antagonistic for regulation of NXRN3 alternative splicing at AS4. In terms of biological role, isoform 3, which is expressed in growth-arrested cells only, inhibits S phase. The chain is KH domain-containing, RNA-binding, signal transduction-associated protein 1 from Homo sapiens (Human).